Reading from the N-terminus, the 512-residue chain is Lysine--tRNA ligase (512 aa).

Residues E422 and E429 each coordinate Mg(2+).

This sequence belongs to the class-II aminoacyl-tRNA synthetase family. Homodimer. Mg(2+) serves as cofactor.

Its subcellular location is the cytoplasm. It carries out the reaction tRNA(Lys) + L-lysine + ATP = L-lysyl-tRNA(Lys) + AMP + diphosphate. The polypeptide is Lysine--tRNA ligase (Paraburkholderia phymatum (strain DSM 17167 / CIP 108236 / LMG 21445 / STM815) (Burkholderia phymatum)).